A 66-amino-acid polypeptide reads, in one-letter code: Large ribosomal subunit protein bL35 (66 aa).

Basic residues predominate over residues 1–14; it reads MPKMKTKSAAKKRF. Residues 1–34 are disordered; that stretch reads MPKMKTKSAAKKRFSMTATGKVKAGPAGKRHGMI.

It belongs to the bacterial ribosomal protein bL35 family.

This Paracoccus denitrificans (strain Pd 1222) protein is Large ribosomal subunit protein bL35.